We begin with the raw amino-acid sequence, 357 residues long: Heat-inducible transcription repressor HrcA (357 aa).

Belongs to the HrcA family.

In terms of biological role, negative regulator of class I heat shock genes (grpE-dnaK-dnaJ and groELS operons). Prevents heat-shock induction of these operons. This chain is Heat-inducible transcription repressor HrcA, found in Anabaena sp. (strain L31).